Reading from the N-terminus, the 176-residue chain is Dual-action ribosomal maturation protein DarP (176 aa).

The protein belongs to the DarP family.

The protein resides in the cytoplasm. In terms of biological role, member of a network of 50S ribosomal subunit biogenesis factors which assembles along the 30S-50S interface, preventing incorrect 23S rRNA structures from forming. Promotes peptidyl transferase center (PTC) maturation. The sequence is that of Dual-action ribosomal maturation protein DarP from Haemophilus ducreyi (strain 35000HP / ATCC 700724).